Here is a 124-residue protein sequence, read N- to C-terminus: Fluoride-specific ion channel FluC (124 aa).

Helical transmembrane passes span 4–24 (VIFIGIFGALGCLCRYYLSGW), 32–52 (AFPYGTFAVNIIGAFLIGLIM), 68–88 (GLTIGFLGGLTTFSTFSYETF), and 96–116 (LLIASVNVLTSVLVCLVFTWL). Residues Gly75 and Thr78 each contribute to the Na(+) site.

It belongs to the fluoride channel Fluc/FEX (TC 1.A.43) family.

The protein resides in the cell inner membrane. The catalysed reaction is fluoride(in) = fluoride(out). Na(+) is not transported, but it plays an essential structural role and its presence is essential for fluoride channel function. Functionally, fluoride-specific ion channel. Important for reducing fluoride concentration in the cell, thus reducing its toxicity. This Geotalea daltonii (strain DSM 22248 / JCM 15807 / FRC-32) (Geobacter daltonii) protein is Fluoride-specific ion channel FluC.